The chain runs to 355 residues: Phenylalanine--tRNA ligase alpha subunit (355 aa).

Glutamate 273 contributes to the Mg(2+) binding site.

Belongs to the class-II aminoacyl-tRNA synthetase family. Phe-tRNA synthetase alpha subunit type 1 subfamily. Tetramer of two alpha and two beta subunits. It depends on Mg(2+) as a cofactor.

The protein localises to the cytoplasm. It carries out the reaction tRNA(Phe) + L-phenylalanine + ATP = L-phenylalanyl-tRNA(Phe) + AMP + diphosphate + H(+). This chain is Phenylalanine--tRNA ligase alpha subunit, found in Bifidobacterium adolescentis (strain ATCC 15703 / DSM 20083 / NCTC 11814 / E194a).